The following is a 303-amino-acid chain: MVYLVFLCLLPSLISGASILPEPRKDVRASATDAEIQSLAEQFYAADTNKAASGDITLNLQYKASSSQTSTGTDYANQKLFRYVNEAKLFARPTFARLVNLLDNYAQKTGSAESVPTTEVNEQNAFLDEIFKTSIITKLSNFFISKGYYSSAASFKTDLKAMWFGLYTRTSGPLDSSGFEHVFHGEIHKGKVSGLHNWVKLYLLEKSGQVNYLSYSADGVWKGYPDIYAFQLKWSTYLKTIGSFFVGSSPEFDIAMYTLCYVTRPDSLCSVKMGGSIFKIQTYTWANSTYGNGKRFVASSYPI.

The signal sequence occupies residues Met1–Gly16. Positions Thr32–Ile303 constitute an EndoU domain. Active-site residues include His181, His196, and Lys239. A glycan (N-linked (GlcNAc...) asparagine) is linked at Asn287.

This sequence belongs to the ENDOU family. Monomer. Mn(2+) is required as a cofactor.

Its subcellular location is the secreted. It carries out the reaction ribonucleotidyl-uridine-RNA = a 5'-end dephospho-uridine-RNA + a 3'-end 2',3'-cyclophospho-ribonucleotide-RNA. Endoribonuclease that cleaves single-stranded RNAs at 5' of uridylates and releases a product with a 2',3'-cyclic phosphate at the 3'-end. This is Uridylate-specific endoribonuclease C (endou-c) from Xenopus laevis (African clawed frog).